The following is a 360-amino-acid chain: Mannose-1-phosphate guanylyltransferase catalytic subunit beta (360 aa).

The interval 2–222 (KALILVGGYG…QGFWMDIGQP (221 aa)) is substrate-binding domain. Position 110 (Asp110) interacts with GDP-alpha-D-mannose. Asp110 provides a ligand contact to Mg(2+). Lys162 is an active-site residue. Asp218 is a GDP-alpha-D-mannose binding site. Asp218 is a Mg(2+) binding site. Positions 245-360 (HVGPGFIGNV…ESVPEPRIIM (116 aa)) are hexapeptide repeat domain.

It belongs to the transferase hexapeptide repeat family. Component of the GMPPA-GMPPB mannose-1-phosphate guanylyltransferase complex composed of 4 gmppa subunits and 8 gmppb subunits; the complex is organized into three layers, a central layer made up of 2 gmppa dimers sandwiched between two layers each made up of 2 gmppb dimers. Catalytic activity of gmppb is reduced when part of the complex and binding of GDP-alpha-D-Mannose by gmppa induces allosteric feedback inhibition of gmppb. Mg(2+) is required as a cofactor.

The catalysed reaction is alpha-D-mannose 1-phosphate + GTP + H(+) = GDP-alpha-D-mannose + diphosphate. It participates in nucleotide-sugar biosynthesis; GDP-alpha-D-mannose biosynthesis; GDP-alpha-D-mannose from alpha-D-mannose 1-phosphate (GTP route): step 1/1. Enzyme activity is reduced by incorporation into the GMPPA-GMPPB mannose-1-phosphate guanylyltransferase complex. Allosterically inhibited, when part of the GMPPA-GMPPB complex, by GDP-alpha-D-mannose binding to GMPPA. In terms of biological role, catalytic subunit of the GMPPA-GMPPB mannose-1-phosphate guanylyltransferase complex. Catalyzes the formation of GDP-mannose, an essential precursor of glycan moieties of glycoproteins and glycolipids. Can catalyze the reverse reaction in vitro. Together with GMPPA regulates GDP-alpha-D-mannose levels. The sequence is that of Mannose-1-phosphate guanylyltransferase catalytic subunit beta (gmppb) from Xenopus tropicalis (Western clawed frog).